The primary structure comprises 132 residues: Small ribosomal subunit protein uS8 (132 aa).

This sequence belongs to the universal ribosomal protein uS8 family. As to quaternary structure, part of the 30S ribosomal subunit. Contacts proteins S5 and S12.

In terms of biological role, one of the primary rRNA binding proteins, it binds directly to 16S rRNA central domain where it helps coordinate assembly of the platform of the 30S subunit. In Streptococcus sanguinis (strain SK36), this protein is Small ribosomal subunit protein uS8.